Here is a 487-residue protein sequence, read N- to C-terminus: MARYLTVLGTQSHVGKSILVTALCRILKRRGYRVAPFKAQNMSNNSWITADGSEIGIAQAIQAFAAGAEPRAEMNPVLLKPKGNMTSQVVVLGKPLGDRVVGQYYESIESMMAIALNALYKLSEDYDVIVVEGAGGAAEINLYDRDIANIPLARAIHSPVLLVGDIERGGVFASLYGTIALLPPGDRELVKGLIINKFCGDPSLLGSGVGELEKLTGVPVMGIVPYSGLRIPSEDSVSLGDKKPEGLLDVDIAVVRFPLISNFTDFEALERIARVRYVSLDDSLGRPDIVILPGSKNTVSDLKMLKNSPLASEICSLASDGVPVIGICGGYQMLGRQVVDSGIEGGMPETIDGLGLLPVTTVFDRYEKCTCQSTKTVTGAGPLLAGIRGSAVTGYEIHMGQTRTDSPAFGDDGCVSDSGTILGTYLHGIFNNASFTDAVLKYACERKGLRYVRPEGVRDPYDELADIVESAIDLDAIIRLIESQDKV.

Residues 249–435 enclose the GATase cobBQ-type domain; that stretch reads DVDIAVVRFP…LHGIFNNASF (187 aa). The Nucleophile role is filled by cysteine 328. Histidine 427 is a catalytic residue.

The protein belongs to the CobB/CobQ family. CobQ subfamily.

The protein operates within cofactor biosynthesis; adenosylcobalamin biosynthesis. Functionally, catalyzes amidations at positions B, D, E, and G on adenosylcobyrinic A,C-diamide. NH(2) groups are provided by glutamine, and one molecule of ATP is hydrogenolyzed for each amidation. In Methanocella arvoryzae (strain DSM 22066 / NBRC 105507 / MRE50), this protein is Probable cobyric acid synthase.